A 300-amino-acid chain; its full sequence is 1D-myo-inositol 2-acetamido-2-deoxy-alpha-D-glucopyranoside deacetylase (300 aa).

Zn(2+) contacts are provided by His13, Asp16, and His147.

The protein belongs to the MshB deacetylase family. Zn(2+) serves as cofactor.

The catalysed reaction is 1D-myo-inositol 2-acetamido-2-deoxy-alpha-D-glucopyranoside + H2O = 1D-myo-inositol 2-amino-2-deoxy-alpha-D-glucopyranoside + acetate. Catalyzes the deacetylation of 1D-myo-inositol 2-acetamido-2-deoxy-alpha-D-glucopyranoside (GlcNAc-Ins) in the mycothiol biosynthesis pathway. The protein is 1D-myo-inositol 2-acetamido-2-deoxy-alpha-D-glucopyranoside deacetylase of Mycobacterium avium (strain 104).